The sequence spans 421 residues: ATP-dependent RNA helicase RhlB (421 aa).

The Q motif signature appears at 9 to 37 (QKFSDFALHPKVVEVLEKKGFHNCTPIQA). A Helicase ATP-binding domain is found at 40 to 219 (LPLTLAGRDV…FEQMNNAEYI (180 aa)). 53–60 (AQTGTGKT) serves as a coordination point for ATP. Residues 165 to 168 (DEAD) carry the DEAD box motif. The Helicase C-terminal domain maps to 245-390 (RLLQTLIEEE…VSKYNPDALM (146 aa)). Residues 392 to 421 (DLPKPLRLTRPRTGNGPRRTGAPRNRRRSG) are disordered. Positions 402-414 (PRTGNGPRRTGAP) are enriched in low complexity.

This sequence belongs to the DEAD box helicase family. RhlB subfamily. As to quaternary structure, component of the RNA degradosome, which is a multiprotein complex involved in RNA processing and mRNA degradation.

The protein localises to the cytoplasm. It catalyses the reaction ATP + H2O = ADP + phosphate + H(+). Its function is as follows. DEAD-box RNA helicase involved in RNA degradation. Has RNA-dependent ATPase activity and unwinds double-stranded RNA. The sequence is that of ATP-dependent RNA helicase RhlB from Shigella boydii serotype 18 (strain CDC 3083-94 / BS512).